Reading from the N-terminus, the 358-residue chain is Aurora kinase (358 aa).

Residues 1-49 (MENKATLARNIGEKRVSPRSKVNGTGKSWRISYSPQRMDGVSSGRNVSK) are disordered. The segment covering 20–35 (SKVNGTGKSWRISYSP) has biased composition (polar residues). The Protein kinase domain occupies 100-358 (FEVGRKLGKG…PWILKNKPFW (259 aa)). ATP contacts are provided by residues 106–114 (LGKGKFGKV) and K129. D223 (proton acceptor) is an active-site residue.

It belongs to the protein kinase superfamily. Ser/Thr protein kinase family. Aurora subfamily.

It localises to the nucleus. The protein resides in the cytoplasm. Its subcellular location is the cytoskeleton. The protein localises to the spindle. It is found in the chromosome. It localises to the centromere. The protein resides in the kinetochore. The enzyme catalyses L-seryl-[protein] + ATP = O-phospho-L-seryl-[protein] + ADP + H(+). It carries out the reaction L-threonyl-[protein] + ATP = O-phospho-L-threonyl-[protein] + ADP + H(+). Functionally, component of the chromosomal passenger complex (CPC), a complex that acts as a key regulator of chromosome segregation and cytokinesis. Has a role in error-correction of aberrent kinetochore-microtubule attachments to ensure that sister kinetochores become bioriented and connect to opposite poles by promoting spindle assembly checkpoint signaling. This Candida glabrata (strain ATCC 2001 / BCRC 20586 / JCM 3761 / NBRC 0622 / NRRL Y-65 / CBS 138) (Yeast) protein is Aurora kinase (IPL1).